The chain runs to 291 residues: Elongation factor Ts (291 aa).

The interval 82–85 is involved in Mg(2+) ion dislocation from EF-Tu; that stretch reads TDFC.

It belongs to the EF-Ts family.

The protein resides in the cytoplasm. In terms of biological role, associates with the EF-Tu.GDP complex and induces the exchange of GDP to GTP. It remains bound to the aminoacyl-tRNA.EF-Tu.GTP complex up to the GTP hydrolysis stage on the ribosome. This Methylobacillus flagellatus (strain ATCC 51484 / DSM 6875 / VKM B-1610 / KT) protein is Elongation factor Ts.